We begin with the raw amino-acid sequence, 361 residues long: Inner kinetochore subunit CNN1 (361 aa).

The segment at 1–22 is disordered; that stretch reads MSTPRKAAGNNENTEVSEIRTP. Phosphoserine; by CDK1 is present on S2. T14 carries the phosphothreonine; by CDK1 and MPS1 modification. Phosphoserine; by CDK1 and MPS1 is present on S17. T21 and T42 each carry phosphothreonine; by CDK1. At S50 the chain carries Phosphoserine; by CDK1 and MPS1. The residue at position 52 (S52) is a Phosphoserine; by CDK1. T53 carries the post-translational modification Phosphothreonine; by MPS1. S55 is subject to Phosphoserine; by CDK1. The interacts with the NDC80 complex subunits SPC24 and SPC25 and with the KNL1 complex stretch occupies residues 60–84; that stretch reads NKDPNEVRSFLQDLSQVLARKSQGN. The residue at position 74 (S74) is a Phosphoserine; by CDK1 and MPS1. Phosphothreonine; by MPS1 is present on residues T86 and T88. The residue at position 91 (T91) is a Phosphothreonine; by CDK1 and MPS1. The interval 103–132 is disordered; the sequence is EESQPEENELLRSRSEKLTDNNIGNETQPD. Residues 111–121 show a composition bias toward basic and acidic residues; that stretch reads ELLRSRSEKLT. Phosphoserine; by CDK1 is present on S115. Residues 122–132 show a composition bias toward polar residues; sequence DNNIGNETQPD. The residue at position 129 (T129) is a Phosphothreonine; by CDK1 and MPS1. The residue at position 134 (T134) is a Phosphothreonine; by MPS1. S135 is modified (phosphoserine; by MPS1). Position 139 is a phosphothreonine; by CDK1 and MPS1 (T139). Position 153 is a phosphoserine; by MPS1 (S153). A Phosphothreonine; by MPS1 modification is found at T174. S177 is modified (phosphoserine; by CDK1). T191 is subject to Phosphothreonine; by CDK1. S192 carries the phosphoserine; by CDK1 modification. Positions 193 to 255 are disordered; the sequence is PSIGMDQVDE…SDENLDDIGN (63 aa). The segment covering 219-254 has biased composition (acidic residues); that stretch reads PLSEDLPSDDKEETEEAENEDYSFENTSDENLDDIG. Position 268 is a phosphoserine; by CDK1 (S268). S269 is modified (phosphoserine; by MPS1 and IPL1).

Belongs to the CENP-T/CNN1 family. In terms of assembly, component of the inner kinetochore constitutive centromere-associated network (CCAN) (also known as central kinetochore CTF19 complex in yeast), which is composed of at least AME1, CHL4, CNN1, CTF3, CTF19, IML3, MCM16, MCM21, MCM22, MHF1, MHF2, MIF2, NKP1, NKP2, OKP1 and WIP1. Interacts (via N-terminus) with the outer kinetochore NDC80 complex subunits SPC24 (via C-terminus) and SPC25 (via C-terminus); the interaction is direct and contributes to the correct spatiotemporal organization of the KMN network. Interacts with outer kinetochore MIS12 complex subunit NNF1. Interacts (via N-terminus) with the KNL1 complex. In terms of processing, phosphorylation of the C-terminus by MPS1 kinase regulates interaction with the outer kinetochore Ndc80 complex. Phosphorylation levels rise from S-phase and through metaphase, the protein is thendephosphorylated in anaphase.

The protein resides in the nucleus. The protein localises to the chromosome. It is found in the centromere. Its subcellular location is the kinetochore. In terms of biological role, component of the kinetochore, a multiprotein complex that assembles on centromeric DNA and attaches chromosomes to spindle microtubules, mediating chromosome segregation and sister chromatid segregation during meiosis and mitosis. Component of the inner kinetochore constitutive centromere-associated network (CCAN), which serves as a structural platform for outer kinetochore assembly. Modulates outer kinetochore KMN network activity by regulating interactions within the network. The polypeptide is Inner kinetochore subunit CNN1 (CNN1) (Saccharomyces cerevisiae (strain ATCC 204508 / S288c) (Baker's yeast)).